The primary structure comprises 88 residues: Alpha-latrotoxin associated low molecular weight protein 2 (88 aa).

Residues 1 to 19 (MLKLICIAFLVTVLTLVAG) form the signal peptide. 3 disulfide bridges follow: cysteine 30-cysteine 66, cysteine 46-cysteine 62, and cysteine 49-cysteine 75.

It belongs to the arthropod CHH/MIH/GIH/VIH hormone family. Expressed by the venom gland.

The protein resides in the secreted. Functionally, may increase the toxicity of alpha-latrotoxin and/or other venom components. Is non-toxic to mice and to the cockroach Periplaneta americana. The protein is Alpha-latrotoxin associated low molecular weight protein 2 of Latrodectus hesperus (Western black widow spider).